Consider the following 341-residue polypeptide: Malate dehydrogenase 1, mitochondrial (341 aa).

Residues 1–22 constitute a mitochondrion transit peptide; that stretch reads MFRSMLVRSSASAKQAVIRRSF. Residues 36 to 42 and Asp62 each bind NAD(+); that span reads GAAGGIG. Arg109 and Arg115 together coordinate substrate. NAD(+) is bound by residues Asn122 and 145 to 147; that span reads ISN. Substrate-binding residues include Asn147 and Arg181. Catalysis depends on His205, which acts as the Proton acceptor. Met256 is an NAD(+) binding site.

It belongs to the LDH/MDH superfamily. MDH type 1 family. In terms of assembly, homodimer. Forms intramolecular disulfide bonds. In terms of tissue distribution, expressed in rosette leaves.

It localises to the mitochondrion matrix. It carries out the reaction (S)-malate + NAD(+) = oxaloacetate + NADH + H(+). Negatively regulated by ATP. Not redox-regulated. The formation of intramolecular disulfide bonds does not alter enzymatic activity. Catalyzes a reversible NAD-dependent dehydrogenase reaction involved in central metabolism and redox homeostasis between organelle compartments. Required for carbon dioxide and energy partitioning in leaves. May limit photorespiration during the dark phase. Its activity is essential to shuttle reductants out from the mitochondria to support the photorespiratory flux. Can convert 2-oxoglutarate to (S)-2-hydroxyglutarate in vitro. This Arabidopsis thaliana (Mouse-ear cress) protein is Malate dehydrogenase 1, mitochondrial.